The chain runs to 845 residues: Protein translocase subunit SecA 1 (845 aa).

Residues Gln85, 103 to 107, and Asp492 each bind ATP; that span reads GEGKT.

Belongs to the SecA family. Monomer and homodimer. Part of the essential Sec protein translocation apparatus which comprises SecA, SecYEG and auxiliary proteins SecDF. Other proteins may also be involved.

It is found in the cell membrane. It localises to the cytoplasm. The enzyme catalyses ATP + H2O + cellular proteinSide 1 = ADP + phosphate + cellular proteinSide 2.. Functionally, part of the Sec protein translocase complex. Interacts with the SecYEG preprotein conducting channel. Has a central role in coupling the hydrolysis of ATP to the transfer of proteins into and across the cell membrane, serving as an ATP-driven molecular motor driving the stepwise translocation of polypeptide chains across the membrane. The protein is Protein translocase subunit SecA 1 of Corynebacterium glutamicum (strain ATCC 13032 / DSM 20300 / JCM 1318 / BCRC 11384 / CCUG 27702 / LMG 3730 / NBRC 12168 / NCIMB 10025 / NRRL B-2784 / 534).